Here is a 441-residue protein sequence, read N- to C-terminus: Chromosomal replication initiator protein DnaA (441 aa).

Residues 1–80 (MQNDVLARWE…MHQEISLQFI (80 aa)) are domain I, interacts with DnaA modulators. The tract at residues 80-102 (ILAGQEVDQPKPKERSSEETYIN) is domain II. The domain III, AAA+ region stretch occupies residues 103 to 320 (ILNPRYTFDT…GALIRVSAFS (218 aa)). Positions 147, 149, 150, and 151 each coordinate ATP. The tract at residues 321–441 (SLEQRDATPQ…IKELKKRIGE (121 aa)) is domain IV, binds dsDNA.

The protein belongs to the DnaA family. In terms of assembly, oligomerizes as a right-handed, spiral filament on DNA at oriC.

The protein localises to the cytoplasm. Plays an essential role in the initiation and regulation of chromosomal replication. ATP-DnaA binds to the origin of replication (oriC) to initiate formation of the DNA replication initiation complex once per cell cycle. Binds the DnaA box (a 9 base pair repeat at the origin) and separates the double-stranded (ds)DNA. Forms a right-handed helical filament on oriC DNA; dsDNA binds to the exterior of the filament while single-stranded (ss)DNA is stabiized in the filament's interior. The ATP-DnaA-oriC complex binds and stabilizes one strand of the AT-rich DNA unwinding element (DUE), permitting loading of DNA polymerase. After initiation quickly degrades to an ADP-DnaA complex that is not apt for DNA replication. Binds acidic phospholipids. The protein is Chromosomal replication initiator protein DnaA of Desulforamulus reducens (strain ATCC BAA-1160 / DSM 100696 / MI-1) (Desulfotomaculum reducens).